The following is a 714-amino-acid chain: Sodium-dependent acetylcholine transporter (714 aa).

A disordered region spans residues 1–21 (MSVSSNDPEQRNGRGMASGNN). At 1 to 74 (MSVSSNDPEQ…GNWSNKSDYL (74 aa)) the chain is on the cytoplasmic side. 3 helical membrane-spanning segments follow: residues 75–95 (LAVIGFTAGVGSFWKFPFLVF), 100–120 (AAFLVPYLCMLCLASLPMFFM), and 152–172 (ISGFFAVFFNIISAWTLFYLI). The Extracellular segment spans residues 173-257 (NSFSFSIPWS…LSKGVDDFGT (85 aa)). N-linked (GlcNAc...) asparagine glycosylation is found at asparagine 192, asparagine 205, asparagine 211, and asparagine 222. A run of 9 helical transmembrane segments spans residues 258–278 (LNWYLGLCVLACWIAVFLCLF), 287–307 (VVYVAVIVPFIILTVLLTRLL), 336–356 (AAVQAFYSVSCCSGGLFTIAS), 368–388 (IWLVLIVDVIVSLVGCLLTFS), 422–442 (AGVSVAPLYAGLFFIMILLVV), 476–496 (VCALFILLSIPFCLSSGLFWM), 502–522 (FVLTWPLVVIAFLECMAINWV), 548–568 (ILFKFICPMVYLAILCFLWLD), and 584–604 (ILTAWCIASFPLILIPIVGIW). The Cytoplasmic portion of the chain corresponds to 605-714 (QFCIAKGTIT…IPKFERETAI (110 aa)).

Belongs to the sodium:neurotransmitter symporter (SNF) (TC 2.A.22) family. In terms of assembly, interacts with stn-1; part of the DGC. In terms of tissue distribution, body wall, and vulval and enteric muscles.

The protein localises to the cell membrane. It is found in the postsynaptic cell membrane. Functionally, mediates sodium-dependent uptake of acetylcholine at neuromuscular junctions during periods of increased synaptic activity, may also prevent spillover to adjacent synaptic sites. Not involved in the uptake of other neurotransmitters (GABA, glycine, proline and glutamate) and there was also no inhibition of uptake by adding an excess of other candidate substrates (GABA, glycine, taurine, creatine, proline, alanine, carnitine, glutamate and betaine). Required for muscle integrity; altered transport of acetylcholine due to loss of dystrophin-glycoprotein complex (DGC) function results in muscle degeneration. In Caenorhabditis elegans, this protein is Sodium-dependent acetylcholine transporter.